Reading from the N-terminus, the 348-residue chain is uncharacterized protein (348 aa).

NADP(+) contacts are provided by Lys41 and Tyr170. Ser339 is subject to Phosphoserine.

It belongs to the NAD(P)-dependent epimerase/dehydratase family. Dihydroflavonol-4-reductase subfamily.

This is an uncharacterized protein from Saccharomyces cerevisiae (strain ATCC 204508 / S288c) (Baker's yeast).